Reading from the N-terminus, the 430-residue chain is S-adenosylmethionine synthase (430 aa).

His14 lines the ATP pocket. Asp16 contacts Mg(2+). Glu42 provides a ligand contact to K(+). L-methionine is bound by residues Glu55 and Gln98. Residues 98–108 (QSPDINRGVER) form a flexible loop region. ATP is bound by residues 164-166 (DAK), 254-255 (KF), Asp263, 269-270 (RK), Ala286, and Lys290. Asp263 contacts L-methionine. Lys294 provides a ligand contact to L-methionine.

Belongs to the AdoMet synthase family. In terms of assembly, homotetramer; dimer of dimers. Mg(2+) is required as a cofactor. K(+) serves as cofactor.

Its subcellular location is the cytoplasm. It carries out the reaction L-methionine + ATP + H2O = S-adenosyl-L-methionine + phosphate + diphosphate. It participates in amino-acid biosynthesis; S-adenosyl-L-methionine biosynthesis; S-adenosyl-L-methionine from L-methionine: step 1/1. Catalyzes the formation of S-adenosylmethionine (AdoMet) from methionine and ATP. The overall synthetic reaction is composed of two sequential steps, AdoMet formation and the subsequent tripolyphosphate hydrolysis which occurs prior to release of AdoMet from the enzyme. In Bacteroides thetaiotaomicron (strain ATCC 29148 / DSM 2079 / JCM 5827 / CCUG 10774 / NCTC 10582 / VPI-5482 / E50), this protein is S-adenosylmethionine synthase.